Here is a 306-residue protein sequence, read N- to C-terminus: Ribosomal protein L11 methyltransferase (306 aa).

Residues Thr154, Gly179, Asp201, and Asn242 each coordinate S-adenosyl-L-methionine.

This sequence belongs to the methyltransferase superfamily. PrmA family.

Its subcellular location is the cytoplasm. The catalysed reaction is L-lysyl-[protein] + 3 S-adenosyl-L-methionine = N(6),N(6),N(6)-trimethyl-L-lysyl-[protein] + 3 S-adenosyl-L-homocysteine + 3 H(+). In terms of biological role, methylates ribosomal protein L11. This is Ribosomal protein L11 methyltransferase from Xanthomonas campestris pv. campestris (strain 8004).